The chain runs to 788 residues: Protein TRS1 (788 aa).

Disordered regions lie at residues 1–82 (MAQR…NFWH) and 610–663 (IHKK…PSRV). Over residues 16–25 (RGRGAGGPSG) the composition is skewed to gly residues. Over residues 26-56 (VGSSPPSSCVPMGATSTAGTGASAAPTATPG) the composition is skewed to low complexity. Residues 74–248 (SGNNSNFWHG…HGAGEVVRLY (175 aa)) form an RNA-binding region. Over residues 651-660 (LRRDDEDWKP) the composition is skewed to basic and acidic residues. Residues 672–788 (LDETFWVLGS…NVATHYHYNA (117 aa)) form an interaction with host EIF2AK2/PKR region.

Belongs to the herpesviridae US22 family. In terms of assembly, interacts with host EIF2AK2/PKR; this interaction retains EIF2AK2 to the host nucleus and prevents its activation. Interaction (via N-terminus) with host BECN1; this interaction inhibits host autophagy. Interacts with the viral DNA polymerase accessory subunit UL44. Interacts with host HSPA5.

The protein resides in the virion. Its subcellular location is the host cytoplasm. It localises to the host nucleus. In terms of biological role, inhibits the establishment of the antiviral state in the infected cell. Prevents the phosphorylation of the host eukaryotic translation initiation factor eIF-2alpha/EIF2S1 and thus the shutoff of viral and cellular protein synthesis by directly interacting with EIF2AK2/PKR. Prevents stress granule formation in response to eIF-2alpha/EIF2S1 phosphorylation, thereby rescuing viral replication and protein synthesis. Also inhibits host autophagy by interacting with host Beclin-1/BECN1. The chain is Protein TRS1 (TRS1) from Human cytomegalovirus (strain Merlin) (HHV-5).